Here is a 217-residue protein sequence, read N- to C-terminus: MSSKVSRDTLYEAVREVLHGNQRKRRKFLETVELQISLKNYDPQKDKRFSGTVRLKSTPRPKFSVCVLGDQQHCDEAKAVDIPHMDIEALKKLNKNKKLVKKLAKKYDAFLASESLIKQIPRILGPGLNKAGKFPSLLTHNENMVAKVDEVKSTIKFQMKKVLCLAVAVGHVKMTDDELVYNIHLAVNFLVSLLKKNWQNVRALYIKSTMGKPQRLY.

Residue Ser-2 is modified to N-acetylserine. Tyr-11 is modified (phosphotyrosine). 2 positions are modified to N6-acetyllysine: Lys-91 and Lys-106. At Lys-118 the chain carries N6-acetyllysine; alternate. Residue Lys-118 forms a Glycyl lysine isopeptide (Lys-Gly) (interchain with G-Cter in SUMO1); alternate linkage. Residue Lys-118 forms a Glycyl lysine isopeptide (Lys-Gly) (interchain with G-Cter in SUMO2); alternate linkage. Lys-161 participates in a covalent cross-link: Glycyl lysine isopeptide (Lys-Gly) (interchain with G-Cter in SUMO2).

This sequence belongs to the universal ribosomal protein uL1 family. As to quaternary structure, component of the large ribosomal subunit.

The protein localises to the cytoplasm. Functionally, component of the large ribosomal subunit. The ribosome is a large ribonucleoprotein complex responsible for the synthesis of proteins in the cell. In Bos taurus (Bovine), this protein is Large ribosomal subunit protein uL1 (RPL10A).